A 118-amino-acid polypeptide reads, in one-letter code: Inner membrane protein YhaI (118 aa).

The Periplasmic portion of the chain corresponds to Met-1–Met-25. Residues Phe-26 to Leu-46 form a helical membrane-spanning segment. Glu-47 is a topological domain (cytoplasmic). Residues Leu-48–Ile-68 traverse the membrane as a helical segment. Residues Arg-69–Ser-77 are Periplasmic-facing. The chain crosses the membrane as a helical span at residues Gly-78–Phe-98. Residues Cys-99–Asn-118 are Cytoplasmic-facing.

The protein to E.coli YhaH.

The protein resides in the cell inner membrane. In Escherichia coli O157:H7, this protein is Inner membrane protein YhaI (yhaI).